An 87-amino-acid chain; its full sequence is Small archaeal modifier protein 1 (87 aa).

At Gly-87 the chain carries 1-thioglycine; alternate. A Glycyl adenylate; alternate modification is found at Gly-87. Residue Gly-87 forms a Glycyl lysine isopeptide (Gly-Lys) (interchain with K-? in acceptor proteins); alternate linkage.

Post-translationally, the C-terminal glycine is likely acyl-adenylated (-COAMP) by UbaA, and also probably thiocarboxylated (-COSH) to function in sulfur transfer.

In terms of biological role, functions as a protein modifier covalently attached to lysine residues of substrate proteins, as well as a sulfur carrier in molybdenum cofactor (MoCo) biosynthesis. The protein modification process is termed sampylation and involves the formation of an isopeptide bond between the SAMP1 C-terminal glycine carboxylate and the epsilon-amino group of lysine residues on target proteins. May serve as a proteolytic signal in the cell to target proteins for degradation by proteasomes. This is Small archaeal modifier protein 1 (samp1) from Haloferax volcanii (strain ATCC 29605 / DSM 3757 / JCM 8879 / NBRC 14742 / NCIMB 2012 / VKM B-1768 / DS2) (Halobacterium volcanii).